A 288-amino-acid chain; its full sequence is Pantothenate synthetase (288 aa).

31 to 38 contacts ATP; sequence MGNLHRGH. The Proton donor role is filled by His38. Residue Gln62 coordinates (R)-pantoate. Position 62 (Gln62) interacts with beta-alanine. 150–153 serves as a coordination point for ATP; that stretch reads GQKD. (R)-pantoate is bound at residue Gln156. Residues Ile179 and 187 to 190 contribute to the ATP site; that span reads LSSR.

The protein belongs to the pantothenate synthetase family. In terms of assembly, homodimer.

Its subcellular location is the cytoplasm. The catalysed reaction is (R)-pantoate + beta-alanine + ATP = (R)-pantothenate + AMP + diphosphate + H(+). Its pathway is cofactor biosynthesis; (R)-pantothenate biosynthesis; (R)-pantothenate from (R)-pantoate and beta-alanine: step 1/1. Its function is as follows. Catalyzes the condensation of pantoate with beta-alanine in an ATP-dependent reaction via a pantoyl-adenylate intermediate. The polypeptide is Pantothenate synthetase (Wigglesworthia glossinidia brevipalpis).